We begin with the raw amino-acid sequence, 609 residues long: Proline--tRNA ligase (609 aa).

The protein belongs to the class-II aminoacyl-tRNA synthetase family. ProS type 1 subfamily. As to quaternary structure, homodimer.

The protein resides in the cytoplasm. The catalysed reaction is tRNA(Pro) + L-proline + ATP = L-prolyl-tRNA(Pro) + AMP + diphosphate. Functionally, catalyzes the attachment of proline to tRNA(Pro) in a two-step reaction: proline is first activated by ATP to form Pro-AMP and then transferred to the acceptor end of tRNA(Pro). As ProRS can inadvertently accommodate and process non-cognate amino acids such as alanine and cysteine, to avoid such errors it has two additional distinct editing activities against alanine. One activity is designated as 'pretransfer' editing and involves the tRNA(Pro)-independent hydrolysis of activated Ala-AMP. The other activity is designated 'posttransfer' editing and involves deacylation of mischarged Ala-tRNA(Pro). The misacylated Cys-tRNA(Pro) is not edited by ProRS. In Synechococcus sp. (strain JA-3-3Ab) (Cyanobacteria bacterium Yellowstone A-Prime), this protein is Proline--tRNA ligase.